The sequence spans 309 residues: HPr kinase/phosphorylase (309 aa).

Catalysis depends on residues histidine 138 and lysine 159. ATP is bound at residue 153–160; the sequence is GASGIGKS. Serine 160 is a Mg(2+) binding site. Aspartate 177 functions as the Proton acceptor; for phosphorylation activity. Proton donor; for dephosphorylation activity in the catalytic mechanism. Positions 201-210 are important for the catalytic mechanism of both phosphorylation and dephosphorylation; the sequence is IEIRGVGIID. Residue glutamate 202 participates in Mg(2+) binding. Residue arginine 243 is part of the active site. The segment at 264 to 269 is important for the catalytic mechanism of dephosphorylation; sequence PVKTGR.

It belongs to the HPrK/P family. As to quaternary structure, homohexamer. Mg(2+) serves as cofactor.

It catalyses the reaction [HPr protein]-L-serine + ATP = [HPr protein]-O-phospho-L-serine + ADP + H(+). The catalysed reaction is [HPr protein]-O-phospho-L-serine + phosphate + H(+) = [HPr protein]-L-serine + diphosphate. Its function is as follows. Catalyzes the ATP- as well as the pyrophosphate-dependent phosphorylation of a specific serine residue in HPr, a phosphocarrier protein of the phosphoenolpyruvate-dependent sugar phosphotransferase system (PTS). HprK/P also catalyzes the pyrophosphate-producing, inorganic phosphate-dependent dephosphorylation (phosphorolysis) of seryl-phosphorylated HPr (P-Ser-HPr). The two antagonistic activities of HprK/P are regulated by several intracellular metabolites, which change their concentration in response to the absence or presence of rapidly metabolisable carbon sources (glucose, fructose, etc.) in the growth medium. Therefore, by controlling the phosphorylation state of HPr, HPrK/P is a sensor enzyme that plays a major role in the regulation of carbon metabolism and sugar transport: it mediates carbon catabolite repression (CCR), and regulates PTS-catalyzed carbohydrate uptake and inducer exclusion. In Lactococcus lactis subsp. lactis (strain IL1403) (Streptococcus lactis), this protein is HPr kinase/phosphorylase.